We begin with the raw amino-acid sequence, 245 residues long: Rhamnosyl O-methyltransferase (245 aa).

An N-terminal signal peptide occupies residues 1-38 (MGLVWRSRTSLVGQLIGLVRLVASFAAQLFYRPSDAVA).

The protein belongs to the rhamnosyl O-methyltransferase family.

Its function is as follows. Catalyzes the O-methylation of the hydroxyl group located on C-2 of the first rhamnosyl residue linked to the phenolic group of glycosylated phenolphthiocerol dimycocerosates (PGL) and p-hydroxybenzoic acid derivatives (p-HBAD). This is Rhamnosyl O-methyltransferase from Mycobacterium bovis (strain ATCC BAA-935 / AF2122/97).